A 136-amino-acid chain; its full sequence is Large ribosomal subunit protein eL27B (136 aa).

Belongs to the eukaryotic ribosomal protein eL27 family. In terms of assembly, component of the large ribosomal subunit (LSU). Mature yeast ribosomes consist of a small (40S) and a large (60S) subunit. The 40S small subunit contains 1 molecule of ribosomal RNA (18S rRNA) and 33 different proteins (encoded by 57 genes). The large 60S subunit contains 3 rRNA molecules (25S, 5.8S and 5S rRNA) and 46 different proteins (encoded by 81 genes).

It is found in the cytoplasm. Its function is as follows. Component of the ribosome, a large ribonucleoprotein complex responsible for the synthesis of proteins in the cell. The small ribosomal subunit (SSU) binds messenger RNAs (mRNAs) and translates the encoded message by selecting cognate aminoacyl-transfer RNA (tRNA) molecules. The large subunit (LSU) contains the ribosomal catalytic site termed the peptidyl transferase center (PTC), which catalyzes the formation of peptide bonds, thereby polymerizing the amino acids delivered by tRNAs into a polypeptide chain. The nascent polypeptides leave the ribosome through a tunnel in the LSU and interact with protein factors that function in enzymatic processing, targeting, and the membrane insertion of nascent chains at the exit of the ribosomal tunnel. The polypeptide is Large ribosomal subunit protein eL27B (Saccharomyces cerevisiae (strain ATCC 204508 / S288c) (Baker's yeast)).